The following is a 115-amino-acid chain: Na(+)/H(+) antiporter subunit C1 (115 aa).

The next 3 helical transmembrane spans lie at 1-21 (MEII…YLVL), 28-48 (IIMG…TMGG), and 72-92 (LILT…VLAF).

This sequence belongs to the CPA3 antiporters (TC 2.A.63) subunit C family. In terms of assembly, may form a heterooligomeric complex that consists of seven subunits: mnhA1, mnhB1, mnhC1, mnhD1, mnhE1, mnhF1 and mnhG1.

It localises to the cell membrane. In terms of biological role, mnh complex is a Na(+)/H(+) antiporter involved in Na(+) excretion. The sequence is that of Na(+)/H(+) antiporter subunit C1 (mnhC1) from Staphylococcus epidermidis (strain ATCC 35984 / DSM 28319 / BCRC 17069 / CCUG 31568 / BM 3577 / RP62A).